We begin with the raw amino-acid sequence, 464 residues long: Ubiquinone biosynthesis monooxygenase COQ6, mitochondrial (464 aa).

A mitochondrion-targeting transit peptide spans 1–24 (MRCLGGSSLSRLLRMLSQSQGRAL).

This sequence belongs to the UbiH/COQ6 family. As to quaternary structure, component of a multi-subunit COQ enzyme complex, composed of at least coq3, coq4, coq5, coq6, coq7 and coq9. Interacts with coq8b and coq7. Requires FAD as cofactor.

The protein localises to the mitochondrion inner membrane. Its subcellular location is the golgi apparatus. It is found in the cell projection. It catalyses the reaction a 4-hydroxy-3-(all-trans-polyprenyl)benzoate + 2 reduced [2Fe-2S]-[ferredoxin] + O2 + 2 H(+) = a 3,4-dihydroxy-5-(all-trans-polyprenyl)benzoate + 2 oxidized [2Fe-2S]-[ferredoxin] + H2O. The catalysed reaction is a 2-methoxy-6-(all-trans-polyprenyl)phenol + 2 reduced [2Fe-2S]-[ferredoxin] + O2 + 2 H(+) = a 2-methoxy-6-(all-trans-polyprenyl)benzene-1,4-diol + 2 oxidized [2Fe-2S]-[ferredoxin] + H2O. Its pathway is cofactor biosynthesis; ubiquinone biosynthesis. In terms of biological role, FAD-dependent monooxygenase required for two non-consecutive steps during ubiquinone biosynthesis. Required for the C5-ring hydroxylation during ubiquinone biosynthesis by catalyzing the hydroxylation of 4-hydroxy-3-(all-trans-polyprenyl)benzoic acid to 3,4-dihydroxy-5-(all-trans-polyprenyl)benzoic acid. Also acts downstream of coq4, for the C1-hydroxylation during ubiquinone biosynthesis by catalyzing the hydroxylation of 2-methoxy-6-(all-trans-polyprenyl)phenol to 2-methoxy-6-(all-trans-polyprenyl)benzene-1,4-diol. The electrons required for the hydroxylation reaction are funneled indirectly to coq6 from NADPH via a ferredoxin/ferredoxin reductase system. The protein is Ubiquinone biosynthesis monooxygenase COQ6, mitochondrial of Xenopus tropicalis (Western clawed frog).